The primary structure comprises 157 residues: 2-C-methyl-D-erythritol 2,4-cyclodiphosphate synthase (157 aa).

A divalent metal cation-binding residues include D8 and H10. 4-CDP-2-C-methyl-D-erythritol 2-phosphate-binding positions include 8–10 (DVH) and 34–35 (HS). An a divalent metal cation-binding site is contributed by H42. 4-CDP-2-C-methyl-D-erythritol 2-phosphate is bound by residues 56–58 (DIG), 61–65 (FPDTD), 100–106 (AQAPKMA), 132–135 (TTTE), F139, and R142.

The protein belongs to the IspF family. Homotrimer. A divalent metal cation is required as a cofactor.

The catalysed reaction is 4-CDP-2-C-methyl-D-erythritol 2-phosphate = 2-C-methyl-D-erythritol 2,4-cyclic diphosphate + CMP. The protein operates within isoprenoid biosynthesis; isopentenyl diphosphate biosynthesis via DXP pathway; isopentenyl diphosphate from 1-deoxy-D-xylulose 5-phosphate: step 4/6. Its function is as follows. Involved in the biosynthesis of isopentenyl diphosphate (IPP) and dimethylallyl diphosphate (DMAPP), two major building blocks of isoprenoid compounds. Catalyzes the conversion of 4-diphosphocytidyl-2-C-methyl-D-erythritol 2-phosphate (CDP-ME2P) to 2-C-methyl-D-erythritol 2,4-cyclodiphosphate (ME-CPP) with a corresponding release of cytidine 5-monophosphate (CMP). The polypeptide is 2-C-methyl-D-erythritol 2,4-cyclodiphosphate synthase (Stutzerimonas stutzeri (strain A1501) (Pseudomonas stutzeri)).